Consider the following 187-residue polypeptide: UPF0340 protein SPD_0576 (187 aa).

It belongs to the UPF0340 family.

The polypeptide is UPF0340 protein SPD_0576 (Streptococcus pneumoniae serotype 2 (strain D39 / NCTC 7466)).